The sequence spans 79 residues: uncharacterized protein (79 aa).

It belongs to the asfivirus D79L family.

This is an uncharacterized protein from Ornithodoros (relapsing fever ticks).